The following is a 141-amino-acid chain: Large ribosomal subunit protein uL16 (141 aa).

Belongs to the universal ribosomal protein uL16 family. Part of the 50S ribosomal subunit.

Binds 23S rRNA and is also seen to make contacts with the A and possibly P site tRNAs. This is Large ribosomal subunit protein uL16 from Kosmotoga olearia (strain ATCC BAA-1733 / DSM 21960 / TBF 19.5.1).